The following is a 216-amino-acid chain: Adenylate kinase (216 aa).

10–15 (GAGKGT) contacts ATP. The interval 30-59 (STGDIFRANIKEKTPLGIEAKRYMDNGQLV) is NMP. AMP contacts are provided by residues T31, R36, 57–59 (QLV), 85–88 (GFPR), and Q92. An LID region spans residues 126–163 (GRRVCTSCGASYHIRFNPPKIEGKCDICDNELIQRKDD). Residue R127 coordinates ATP. Zn(2+) contacts are provided by C130 and C133. 136 to 137 (SY) lines the ATP pocket. Zn(2+) contacts are provided by C150 and C153. Positions 160 and 171 each coordinate AMP. ATP is bound at residue E199.

Belongs to the adenylate kinase family. In terms of assembly, monomer.

It is found in the cytoplasm. It catalyses the reaction AMP + ATP = 2 ADP. It participates in purine metabolism; AMP biosynthesis via salvage pathway; AMP from ADP: step 1/1. In terms of biological role, catalyzes the reversible transfer of the terminal phosphate group between ATP and AMP. Plays an important role in cellular energy homeostasis and in adenine nucleotide metabolism. This Clostridium botulinum (strain Loch Maree / Type A3) protein is Adenylate kinase.